A 395-amino-acid polypeptide reads, in one-letter code: Probable eukaryotic translation initiation factor 5 (395 aa).

A GTP-binding site is contributed by 28–35 (GKGNGIKT). 2 disordered regions span residues 146–171 (PPAKKKSHKHKRDSPVAEEEDGAEDE) and 374–395 (LAEASDESESEDEEEEEEDDDE). The span at 147–157 (PAKKKSHKHKR) shows a compositional bias: basic residues. Composition is skewed to acidic residues over residues 161–170 (VAEEEDGAED) and 377–395 (ASDESESEDEEEEEEDDDE). A W2 domain is found at 228 to 384 (EEAESSRYDQ…AEASDESESE (157 aa)).

It belongs to the eIF-2-beta/eIF-5 family. In terms of assembly, monomer.

Its function is as follows. Catalyzes the hydrolysis of GTP bound to the 40S ribosomal initiation complex (40S.mRNA.Met-tRNA[F].eIF-2.GTP) with the subsequent joining of a 60S ribosomal subunit resulting in the release of eIF-2 and the guanine nucleotide. The subsequent joining of a 60S ribosomal subunit results in the formation of a functional 80S initiation complex (80S.mRNA.Met-tRNA[F]). The sequence is that of Probable eukaryotic translation initiation factor 5 (tif5) from Schizosaccharomyces pombe (strain 972 / ATCC 24843) (Fission yeast).